A 257-amino-acid polypeptide reads, in one-letter code: MKKEKPLILLSNDDGVEAKGLNELIRGLRGMGEIIVMAPDGPRSGASGAITSEHPVKYYKVREEEDLTVYKCTGTPVDCVKLALHTVVPRRPDVVIGGINHGDNSSVNVHYSGTMGVVIEGCLKGISSIGYSLCNHFADADFSSSLPYIRRITEQVLEHGLPLGICLNVNFPDTASLKGVRICRQTNGAWINEWKRSLHPRGGEYFWLTGEFDNYEPEAEDSDHWALGHGYVAVTPTQIDVTAYGMMNELKNWNLEV.

A divalent metal cation-binding residues include aspartate 13, aspartate 14, serine 44, and asparagine 100.

This sequence belongs to the SurE nucleotidase family. Requires a divalent metal cation as cofactor.

The protein resides in the cytoplasm. The enzyme catalyses a ribonucleoside 5'-phosphate + H2O = a ribonucleoside + phosphate. Nucleotidase that shows phosphatase activity on nucleoside 5'-monophosphates. This is 5'-nucleotidase SurE from Phocaeicola vulgatus (strain ATCC 8482 / DSM 1447 / JCM 5826 / CCUG 4940 / NBRC 14291 / NCTC 11154) (Bacteroides vulgatus).